A 320-amino-acid chain; its full sequence is tRNA pseudouridine synthase B (320 aa).

D49 (nucleophile) is an active-site residue.

The protein belongs to the pseudouridine synthase TruB family. Type 1 subfamily.

The enzyme catalyses uridine(55) in tRNA = pseudouridine(55) in tRNA. Responsible for synthesis of pseudouridine from uracil-55 in the psi GC loop of transfer RNAs. This chain is tRNA pseudouridine synthase B, found in Bartonella tribocorum (strain CIP 105476 / IBS 506).